Here is a 218-residue protein sequence, read N- to C-terminus: Glutathione S-transferase Mu 2 (218 aa).

The region spanning 2–88 (PMTLGYWDIR…YLGRKHNLCG (87 aa)) is the GST N-terminal domain. Position 7 to 8 (7 to 8 (YW)) interacts with glutathione. Phosphoserine is present on residues Ser-27 and Ser-44. Residues 43–46 (RSQW), Lys-50, 59–60 (NL), and 72–73 (QS) contribute to the glutathione site. In terms of domain architecture, GST C-terminal spans 90–214 (TEEERIRVDV…SKPIFAKMAF (125 aa)). Tyr-116 contacts substrate. A Phosphoserine modification is found at Ser-117.

It belongs to the GST superfamily. Mu family. Homodimer or heterodimer.

It is found in the cytoplasm. The enzyme catalyses RX + glutathione = an S-substituted glutathione + a halide anion + H(+). It catalyses the reaction 11(S)-hydroxy-14(S),15(S)-epoxy-(5Z,8Z,12E)-eicosatrienoate + glutathione = (11S,15S)-dihydroxy-14(R)-S-glutathionyl-(5Z,8Z,12E)-eicosatrienoate. In terms of biological role, conjugation of reduced glutathione to a wide number of exogenous and endogenous hydrophobic electrophiles. Participates in the formation of novel hepoxilin regioisomers. The chain is Glutathione S-transferase Mu 2 from Rattus norvegicus (Rat).